The primary structure comprises 245 residues: 1-(5-phosphoribosyl)-5-[(5-phosphoribosylamino)methylideneamino] imidazole-4-carboxamide isomerase (245 aa).

Catalysis depends on aspartate 7, which acts as the Proton acceptor. Aspartate 129 acts as the Proton donor in catalysis.

It belongs to the HisA/HisF family.

It localises to the cytoplasm. It catalyses the reaction 1-(5-phospho-beta-D-ribosyl)-5-[(5-phospho-beta-D-ribosylamino)methylideneamino]imidazole-4-carboxamide = 5-[(5-phospho-1-deoxy-D-ribulos-1-ylimino)methylamino]-1-(5-phospho-beta-D-ribosyl)imidazole-4-carboxamide. Its pathway is amino-acid biosynthesis; L-histidine biosynthesis; L-histidine from 5-phospho-alpha-D-ribose 1-diphosphate: step 4/9. The chain is 1-(5-phosphoribosyl)-5-[(5-phosphoribosylamino)methylideneamino] imidazole-4-carboxamide isomerase from Shewanella loihica (strain ATCC BAA-1088 / PV-4).